We begin with the raw amino-acid sequence, 471 residues long: Tryptophanase (471 aa).

N6-(pyridoxal phosphate)lysine is present on Lys-270.

Belongs to the beta-eliminating lyase family. As to quaternary structure, homotetramer. It depends on pyridoxal 5'-phosphate as a cofactor.

It carries out the reaction L-tryptophan + H2O = indole + pyruvate + NH4(+). It participates in amino-acid degradation; L-tryptophan degradation via pyruvate pathway; indole and pyruvate from L-tryptophan: step 1/1. This chain is Tryptophanase, found in Histophilus somni (strain 129Pt) (Haemophilus somnus).